The primary structure comprises 21 residues: GVTGFGFDLVRYLFAGVVDGR.

Belongs to the vitamin-B12 independent methionine synthase family. Requires Zn(2+) as cofactor.

Its subcellular location is the cytoplasm. It catalyses the reaction 5-methyltetrahydropteroyltri-L-glutamate + L-homocysteine = tetrahydropteroyltri-L-glutamate + L-methionine. The protein operates within amino-acid biosynthesis; L-methionine biosynthesis via de novo pathway; L-methionine from L-homocysteine (MetE route): step 1/1. Its function is as follows. Catalyzes the transfer of a methyl group from 5-methyltetrahydrofolate to homocysteine resulting in methionine formation. The polypeptide is 5-methyltetrahydropteroyltriglutamate--homocysteine methyltransferase (Populus euphratica (Euphrates poplar)).